A 75-amino-acid polypeptide reads, in one-letter code: Putative sulfur carrier protein YrkI (75 aa).

Cysteine 14 functions as the Cysteine persulfide intermediate in the catalytic mechanism.

It belongs to the sulfur carrier protein TusA family.

This chain is Putative sulfur carrier protein YrkI (yrkI), found in Bacillus subtilis (strain 168).